The sequence spans 197 residues: NADH-quinone oxidoreductase subunit C (197 aa).

Belongs to the complex I 30 kDa subunit family. As to quaternary structure, NDH-1 is composed of 14 different subunits. Subunits NuoB, C, D, E, F, and G constitute the peripheral sector of the complex.

Its subcellular location is the cell inner membrane. The catalysed reaction is a quinone + NADH + 5 H(+)(in) = a quinol + NAD(+) + 4 H(+)(out). Its function is as follows. NDH-1 shuttles electrons from NADH, via FMN and iron-sulfur (Fe-S) centers, to quinones in the respiratory chain. The immediate electron acceptor for the enzyme in this species is believed to be ubiquinone. Couples the redox reaction to proton translocation (for every two electrons transferred, four hydrogen ions are translocated across the cytoplasmic membrane), and thus conserves the redox energy in a proton gradient. This Methylobacillus flagellatus (strain ATCC 51484 / DSM 6875 / VKM B-1610 / KT) protein is NADH-quinone oxidoreductase subunit C.